Reading from the N-terminus, the 342-residue chain is S-adenosylmethionine:tRNA ribosyltransferase-isomerase (342 aa).

Belongs to the QueA family. Monomer.

It is found in the cytoplasm. The enzyme catalyses 7-aminomethyl-7-carbaguanosine(34) in tRNA + S-adenosyl-L-methionine = epoxyqueuosine(34) in tRNA + adenine + L-methionine + 2 H(+). It functions in the pathway tRNA modification; tRNA-queuosine biosynthesis. Transfers and isomerizes the ribose moiety from AdoMet to the 7-aminomethyl group of 7-deazaguanine (preQ1-tRNA) to give epoxyqueuosine (oQ-tRNA). In Streptococcus agalactiae serotype V (strain ATCC BAA-611 / 2603 V/R), this protein is S-adenosylmethionine:tRNA ribosyltransferase-isomerase.